A 374-amino-acid polypeptide reads, in one-letter code: tRNA 2-selenouridine synthase (374 aa).

In terms of domain architecture, Rhodanese spans 12–136; it reads FLRDVPMLDT…MRGFLLQTID (125 aa). The active-site S-selanylcysteine intermediate is Cys95.

This sequence belongs to the SelU family. In terms of assembly, monomer.

The catalysed reaction is 5-methylaminomethyl-2-thiouridine(34) in tRNA + selenophosphate + (2E)-geranyl diphosphate + H2O + H(+) = 5-methylaminomethyl-2-selenouridine(34) in tRNA + (2E)-thiogeraniol + phosphate + diphosphate. It carries out the reaction 5-methylaminomethyl-2-thiouridine(34) in tRNA + (2E)-geranyl diphosphate = 5-methylaminomethyl-S-(2E)-geranyl-thiouridine(34) in tRNA + diphosphate. The enzyme catalyses 5-methylaminomethyl-S-(2E)-geranyl-thiouridine(34) in tRNA + selenophosphate + H(+) = 5-methylaminomethyl-2-(Se-phospho)selenouridine(34) in tRNA + (2E)-thiogeraniol. It catalyses the reaction 5-methylaminomethyl-2-(Se-phospho)selenouridine(34) in tRNA + H2O = 5-methylaminomethyl-2-selenouridine(34) in tRNA + phosphate. In terms of biological role, involved in the post-transcriptional modification of the uridine at the wobble position (U34) of tRNA(Lys), tRNA(Glu) and tRNA(Gln). Catalyzes the conversion of 2-thiouridine (S2U-RNA) to 2-selenouridine (Se2U-RNA). Acts in a two-step process involving geranylation of 2-thiouridine (S2U) to S-geranyl-2-thiouridine (geS2U) and subsequent selenation of the latter derivative to 2-selenouridine (Se2U) in the tRNA chain. This Bordetella petrii (strain ATCC BAA-461 / DSM 12804 / CCUG 43448) protein is tRNA 2-selenouridine synthase.